The chain runs to 415 residues: Gamma-glutamyl phosphate reductase (415 aa).

This sequence belongs to the gamma-glutamyl phosphate reductase family.

Its subcellular location is the cytoplasm. It carries out the reaction L-glutamate 5-semialdehyde + phosphate + NADP(+) = L-glutamyl 5-phosphate + NADPH + H(+). It functions in the pathway amino-acid biosynthesis; L-proline biosynthesis; L-glutamate 5-semialdehyde from L-glutamate: step 2/2. Functionally, catalyzes the NADPH-dependent reduction of L-glutamate 5-phosphate into L-glutamate 5-semialdehyde and phosphate. The product spontaneously undergoes cyclization to form 1-pyrroline-5-carboxylate. This Pseudoalteromonas translucida (strain TAC 125) protein is Gamma-glutamyl phosphate reductase.